We begin with the raw amino-acid sequence, 432 residues long: Adenylosuccinate synthetase (432 aa).

GTP-binding positions include 11-17 and 39-41; these read GDEGKGK and GHT. D12 functions as the Proton acceptor in the catalytic mechanism. Mg(2+) contacts are provided by D12 and G39. IMP contacts are provided by residues 12 to 15, 37 to 40, T134, R148, N230, T245, and R309; these read DEGK and NAGH. H40 acts as the Proton donor in catalysis. 305 to 311 provides a ligand contact to substrate; it reads VTTGRKR. GTP is bound by residues R311, 337 to 339, and 419 to 421; these read KLD and GTG.

Belongs to the adenylosuccinate synthetase family. As to quaternary structure, homodimer. The cofactor is Mg(2+).

It is found in the cytoplasm. The enzyme catalyses IMP + L-aspartate + GTP = N(6)-(1,2-dicarboxyethyl)-AMP + GDP + phosphate + 2 H(+). It participates in purine metabolism; AMP biosynthesis via de novo pathway; AMP from IMP: step 1/2. Its function is as follows. Plays an important role in the de novo pathway and in the salvage pathway of purine nucleotide biosynthesis. Catalyzes the first committed step in the biosynthesis of AMP from IMP. In Candida glabrata (strain ATCC 2001 / BCRC 20586 / JCM 3761 / NBRC 0622 / NRRL Y-65 / CBS 138) (Yeast), this protein is Adenylosuccinate synthetase.